The following is a 178-amino-acid chain: uncharacterized protein (178 aa).

5 helical membrane passes run 13-33 (GIVLTLTVLINGLIAVLFFMP), 48-68 (MLNAIFNSFTFIFLLAALIMI), 80-100 (ILAAFTTTLLFLICYVTYHSI), 115-135 (IYFFILITHICLSAIIVPLAL), and 155-175 (WTMPLWLYVSLTGVIVYLMIS).

The protein resides in the cell membrane. This is an uncharacterized protein from Bacillus subtilis (strain 168).